A 734-amino-acid polypeptide reads, in one-letter code: Photosystem I P700 chlorophyll a apoprotein A2 (734 aa).

8 helical membrane passes run 46 to 69 (IFAS…FHVA), 135 to 158 (LYTG…LHLQ), 175 to 199 (LNHH…HVAI), 273 to 291 (IAHH…GHMY), 330 to 353 (LHFQ…QHMY), 369 to 395 (AALY…IFFI), 417 to 439 (AIIS…LYVH), and 517 to 535 (FLVH…LILV). Residues C559 and C568 each contribute to the [4Fe-4S] cluster site. A run of 2 helical transmembrane segments spans residues 575–596 (AFYL…YWHW) and 643–665 (LSVW…MFLI). Residues H654, M662, and Y670 each contribute to the chlorophyll a site. Residue W671 participates in phylloquinone binding. Residues 707 to 727 (LVGLAHFSVGYIFTYAAFLIA) form a helical membrane-spanning segment.

Belongs to the PsaA/PsaB family. The PsaA/B heterodimer binds the P700 chlorophyll special pair and subsequent electron acceptors. PSI consists of a core antenna complex that captures photons, and an electron transfer chain that converts photonic excitation into a charge separation. The eukaryotic PSI reaction center is composed of at least 11 subunits. P700 is a chlorophyll a/chlorophyll a' dimer, A0 is one or more chlorophyll a, A1 is one or both phylloquinones and FX is a shared 4Fe-4S iron-sulfur center. is required as a cofactor.

The protein resides in the plastid. It is found in the chloroplast thylakoid membrane. The catalysed reaction is reduced [plastocyanin] + hnu + oxidized [2Fe-2S]-[ferredoxin] = oxidized [plastocyanin] + reduced [2Fe-2S]-[ferredoxin]. Its function is as follows. PsaA and PsaB bind P700, the primary electron donor of photosystem I (PSI), as well as the electron acceptors A0, A1 and FX. PSI is a plastocyanin-ferredoxin oxidoreductase, converting photonic excitation into a charge separation, which transfers an electron from the donor P700 chlorophyll pair to the spectroscopically characterized acceptors A0, A1, FX, FA and FB in turn. Oxidized P700 is reduced on the lumenal side of the thylakoid membrane by plastocyanin. This is Photosystem I P700 chlorophyll a apoprotein A2 from Nicotiana tabacum (Common tobacco).